Reading from the N-terminus, the 299-residue chain is Bifunctional protein FolD (299 aa).

NADP(+)-binding positions include 168–170 (GRS), Ser-193, and Ile-234.

The protein belongs to the tetrahydrofolate dehydrogenase/cyclohydrolase family. Homodimer.

The catalysed reaction is (6R)-5,10-methylene-5,6,7,8-tetrahydrofolate + NADP(+) = (6R)-5,10-methenyltetrahydrofolate + NADPH. It carries out the reaction (6R)-5,10-methenyltetrahydrofolate + H2O = (6R)-10-formyltetrahydrofolate + H(+). Its pathway is one-carbon metabolism; tetrahydrofolate interconversion. Catalyzes the oxidation of 5,10-methylenetetrahydrofolate to 5,10-methenyltetrahydrofolate and then the hydrolysis of 5,10-methenyltetrahydrofolate to 10-formyltetrahydrofolate. In Brucella anthropi (strain ATCC 49188 / DSM 6882 / CCUG 24695 / JCM 21032 / LMG 3331 / NBRC 15819 / NCTC 12168 / Alc 37) (Ochrobactrum anthropi), this protein is Bifunctional protein FolD.